A 168-amino-acid chain; its full sequence is 2-C-methyl-D-erythritol 2,4-cyclodiphosphate synthase (168 aa).

The a divalent metal cation site is built by Asp-13 and His-15. 4-CDP-2-C-methyl-D-erythritol 2-phosphate is bound by residues 13-15 (DVH) and 39-40 (HS). Position 47 (His-47) interacts with a divalent metal cation. 4-CDP-2-C-methyl-D-erythritol 2-phosphate is bound by residues 61–63 (DIG), 66–70 (FPDTD), Phe-144, and Lys-147.

This sequence belongs to the IspF family. As to quaternary structure, homotrimer. A divalent metal cation serves as cofactor.

It catalyses the reaction 4-CDP-2-C-methyl-D-erythritol 2-phosphate = 2-C-methyl-D-erythritol 2,4-cyclic diphosphate + CMP. It functions in the pathway isoprenoid biosynthesis; isopentenyl diphosphate biosynthesis via DXP pathway; isopentenyl diphosphate from 1-deoxy-D-xylulose 5-phosphate: step 4/6. Its function is as follows. Involved in the biosynthesis of isopentenyl diphosphate (IPP) and dimethylallyl diphosphate (DMAPP), two major building blocks of isoprenoid compounds. Catalyzes the conversion of 4-diphosphocytidyl-2-C-methyl-D-erythritol 2-phosphate (CDP-ME2P) to 2-C-methyl-D-erythritol 2,4-cyclodiphosphate (ME-CPP) with a corresponding release of cytidine 5-monophosphate (CMP). This is 2-C-methyl-D-erythritol 2,4-cyclodiphosphate synthase from Ralstonia pickettii (strain 12J).